Here is a 341-residue protein sequence, read N- to C-terminus: MKALSKLKAEKGIWLVDAPKPVMGHNDLLIKIKKTAICGTDMHIYNWDEWSQKTIPVPMVVGHEYVGEVVDIGQEVRGFKIGDRVSGEGHITCGHCRNCRAGRTHLCRNTSGVGVNREGSFAEYLVIPAFNAFKIPDDISDDLASIFDPFGNAVHTALSFDLVGEDVLITGAGPIGIMAAAVCRHVGARHVVITDVNEYRLELARKMGATRAVNVSKESLKDVMKELGMTEGFDVGLEMSGVPSAFHAMLDTMNHGGKVAMLGIPGGEMAIDWSKVIFKGLVIKGIYGREMFETWYKMASLIQSGLDISPIITHHFKIDDFQQGFDAMGSGQSGKVILSWD.

Residue Cys-38 participates in Zn(2+) binding. Catalysis depends on charge relay system residues Thr-40 and His-43. Zn(2+) is bound by residues His-63, Glu-64, Cys-93, Cys-96, Cys-99, and Cys-107. Residues Ile-175, Asp-195, Arg-200, 262-264, and 286-287 contribute to the NAD(+) site; these read LGI and IY.

This sequence belongs to the zinc-containing alcohol dehydrogenase family. In terms of assembly, homotetramer. The cofactor is Zn(2+).

The protein localises to the cytoplasm. The catalysed reaction is L-threonine + NAD(+) = (2S)-2-amino-3-oxobutanoate + NADH + H(+). It functions in the pathway amino-acid degradation; L-threonine degradation via oxydo-reductase pathway; glycine from L-threonine: step 1/2. Catalyzes the NAD(+)-dependent oxidation of L-threonine to 2-amino-3-ketobutyrate. The protein is L-threonine 3-dehydrogenase of Shewanella baltica (strain OS223).